Here is a 517-residue protein sequence, read N- to C-terminus: Aldehyde dehydrogenase, mitochondrial (517 aa).

The transit peptide at 1-17 (MLRAAARFGPRLGRRLL) directs the protein to the mitochondrion. The SIFI-degron motif lies at 9 to 24 (GPRLGRRLLSAAATQA). K52, K73, K78, and K159 each carry N6-acetyllysine. An NAD(+)-binding site is contributed by 262–267 (GSTEIG). E285 (proton acceptor) is an active-site residue. The Nucleophile role is filled by C319. Residues K368, K383, K426, K428, and K451 each carry the N6-acetyllysine modification.

This sequence belongs to the aldehyde dehydrogenase family. In terms of assembly, homotetramer. Post-translationally, in response to mitochondrial stress, the precursor protein is ubiquitinated by the SIFI complex in the cytoplasm before mitochondrial import, leading to its degradation. Within the SIFI complex, UBR4 initiates ubiquitin chain that are further elongated or branched by KCMF1.

Its subcellular location is the mitochondrion matrix. The enzyme catalyses an aldehyde + NAD(+) + H2O = a carboxylate + NADH + 2 H(+). It participates in alcohol metabolism; ethanol degradation; acetate from ethanol: step 2/2. In terms of biological role, required for clearance of cellular formaldehyde, a cytotoxic and carcinogenic metabolite that induces DNA damage. The polypeptide is Aldehyde dehydrogenase, mitochondrial (ALDH2) (Homo sapiens (Human)).